We begin with the raw amino-acid sequence, 224 residues long: uncharacterized protein (224 aa).

5 helical membrane passes run 32 to 52 (ILTLCQLLSPSMLVLHYPLVV), 60 to 80 (LFTNYLYAGTGFDFIMNIYFF), 100 to 120 (IIYLVKVALLIDAFSLISGLG), 130 to 150 (AIAYNWSLFNSFSKIQFLFGF), and 162 to 182 (LGFSFLTGGLPSLVVLGFGII).

This sequence belongs to the derlin family.

The protein localises to the endoplasmic reticulum membrane. This is an uncharacterized protein from Schizosaccharomyces pombe (strain 972 / ATCC 24843) (Fission yeast).